The sequence spans 201 residues: Adenylyl-sulfate kinase (201 aa).

Residue 35–42 (GLSGSGKS) participates in ATP binding. Serine 109 (phosphoserine intermediate) is an active-site residue.

This sequence belongs to the APS kinase family.

It catalyses the reaction adenosine 5'-phosphosulfate + ATP = 3'-phosphoadenylyl sulfate + ADP + H(+). The protein operates within sulfur metabolism; hydrogen sulfide biosynthesis; sulfite from sulfate: step 2/3. Functionally, catalyzes the synthesis of activated sulfate. The chain is Adenylyl-sulfate kinase from Bacteroides thetaiotaomicron (strain ATCC 29148 / DSM 2079 / JCM 5827 / CCUG 10774 / NCTC 10582 / VPI-5482 / E50).